The chain runs to 729 residues: MEVEDSGGVVLTAYHSHARSQPQGAEPRCASRASHPLSRKSIPRCRRINRMLSNESLHPPSFSRSNSQASVDSSASMEEFLREIESIKESSVGASQEQPPTAAAAAAEVKPVDEGELEAEWLQDVGLSTLISGNEEEDGKALLSTLTRTQAAAVKKRYNTYTQTLRKKNKQPVRDVRDIFGVSESPPSDSCEHATQLDGTKEEKDLPGVTKTSRPLPDDASLSSTTLSNGAQDEEGGFVALQSGSVSILEAIPDIAVHTNGSADAEQSVQSTLSDDDYHGKNVPAEAEELSFEVSYSEMVTEMPDRNKWKKSDIKKEDYVLTKFIIQKTRFGLTETGDLSVEDMKKIRHLSLIELTAFFDAFGIQLKRNKTERVRGRDNGIFGVPLTVLLDNDRKKDPAVKVPLVLQKFFQKVEESGLESEGIFRLSGCTAKVKQYREELDARFNADKFKWDKMCHREAAVMLKAFFRELPTSLFPVEYIPAFISLMERGPDIKVQFQALHLMVMALPDANRDTAQALMAFFNKVIANESKNRMNLWNISTVMAPNLFFSRSKHSDCEELLLANTATHIIRLMLKYQKILWKVPSFLITQVRRMNEATMLLKKQLPSMKKLLRRKTLDREVSILKTSKVPQKSPSSRRMSDVPEGVIRVHAPLLSKVSMAIQLNSQTKAKDILAKFQYENSHGSSEHIKMQNQRLYEVGGNIGQHCLDPDAYILDVYHINPHAEWVIKP.

A disordered region spans residues 1–78; the sequence is MEVEDSGGVV…ASVDSSASME (78 aa). Residues 37-49 show a composition bias toward basic residues; that stretch reads LSRKSIPRCRRIN. Residues 63–76 show a composition bias toward low complexity; the sequence is SRSNSQASVDSSAS. At Ser70 the chain carries Phosphoserine. Thr164 is subject to Phosphothreonine. The disordered stretch occupies residues 180-234; sequence FGVSESPPSDSCEHATQLDGTKEEKDLPGVTKTSRPLPDDASLSSTTLSNGAQDE. The segment covering 221–231 has biased composition (polar residues); it reads SLSSTTLSNGA. A Rho-GAP domain is found at 384–581; that stretch reads VPLTVLLDND…LMLKYQKILW (198 aa).

Its function is as follows. GTPase activator for the Rho-type GTPases by converting them to an inactive GDP-bound state. This chain is Rho GTPase-activating protein 28 (Arhgap28), found in Mus musculus (Mouse).